A 344-amino-acid polypeptide reads, in one-letter code: Anthranilate phosphoribosyltransferase (344 aa).

Residues glycine 80, 83–84, threonine 88, 90–93, 108–116, and serine 120 each bind 5-phospho-alpha-D-ribose 1-diphosphate; these read GD, NVST, and KHGNRSVSS. Position 80 (glycine 80) interacts with anthranilate. Serine 92 contacts Mg(2+). Asparagine 111 provides a ligand contact to anthranilate. An anthranilate-binding site is contributed by arginine 166. Mg(2+)-binding residues include aspartate 225 and glutamate 226.

Belongs to the anthranilate phosphoribosyltransferase family. In terms of assembly, homodimer. The cofactor is Mg(2+).

It carries out the reaction N-(5-phospho-beta-D-ribosyl)anthranilate + diphosphate = 5-phospho-alpha-D-ribose 1-diphosphate + anthranilate. The protein operates within amino-acid biosynthesis; L-tryptophan biosynthesis; L-tryptophan from chorismate: step 2/5. Functionally, catalyzes the transfer of the phosphoribosyl group of 5-phosphorylribose-1-pyrophosphate (PRPP) to anthranilate to yield N-(5'-phosphoribosyl)-anthranilate (PRA). The sequence is that of Anthranilate phosphoribosyltransferase from Legionella pneumophila (strain Corby).